A 63-amino-acid chain; its full sequence is Large ribosomal subunit protein bL28 (63 aa).

This sequence belongs to the bacterial ribosomal protein bL28 family.

The sequence is that of Large ribosomal subunit protein bL28 from Desulfatibacillum aliphaticivorans.